The following is a 223-amino-acid chain: Ribose-5-phosphate isomerase A (223 aa).

Residues 28-31, 81-84, and 94-97 contribute to the substrate site; these read TGST, DGTD, and KGGG. Catalysis depends on glutamate 103, which acts as the Proton acceptor. Lysine 121 lines the substrate pocket.

It belongs to the ribose 5-phosphate isomerase family. As to quaternary structure, homodimer.

It carries out the reaction aldehydo-D-ribose 5-phosphate = D-ribulose 5-phosphate. It participates in carbohydrate degradation; pentose phosphate pathway; D-ribose 5-phosphate from D-ribulose 5-phosphate (non-oxidative stage): step 1/1. Catalyzes the reversible conversion of ribose-5-phosphate to ribulose 5-phosphate. This chain is Ribose-5-phosphate isomerase A, found in Baumannia cicadellinicola subsp. Homalodisca coagulata.